We begin with the raw amino-acid sequence, 367 residues long: Probable L-aspartate decarboxylase (367 aa).

Residue Lys-216 is modified to N6-(pyridoxal phosphate)lysine.

This sequence belongs to the group II decarboxylase family. MfnA subfamily. Requires pyridoxal 5'-phosphate as cofactor.

It catalyses the reaction L-aspartate + H(+) = beta-alanine + CO2. Its pathway is cofactor biosynthesis; coenzyme A biosynthesis. In terms of biological role, catalyzes the decarboxylation of L-aspartate to produce beta-alanine. The sequence is that of Probable L-aspartate decarboxylase from Archaeoglobus fulgidus (strain ATCC 49558 / DSM 4304 / JCM 9628 / NBRC 100126 / VC-16).